Reading from the N-terminus, the 748-residue chain is Wings apart-like protein homolog 1 (748 aa).

2 disordered regions span residues 23–199 (TLAQ…VYAT) and 614–644 (EGGC…RLDR). The span at 35-64 (PSVRSSDSPDVPDTPDVPVNQLSSPPLSLP) shows a compositional bias: low complexity. Composition is skewed to polar residues over residues 68-79 (SEGNAETLQNLS) and 87-96 (LSQSSTSSLN). Residues 172 to 182 (ISSSSNRYSSR) show a composition bias toward low complexity. A WAPL domain is found at 205 to 723 (KPLASGYGSR…KRLYDFTKAT (519 aa)). Residues 616-633 (GCGDEEEEEEGGDESSDE) show a composition bias toward acidic residues. The segment covering 634–644 (DGVRKDGRLDR) has biased composition (basic and acidic residues).

This sequence belongs to the WAPL family.

Its subcellular location is the nucleus. Functionally, regulator of meiotic chromosome structure and function, playing a role in sister chromatid cohesion, possibly via antagonizing the coh-3/-4 association with axial elements in nuclei during late prophase, cohesin association with chromatin, DNA double strand break repair and polar body positioning following meiotic divisions during oogenesis. Regulates the morphogenesis and temporal assembly of axial elements to control the organization of meiotic chromosomes in pachytene nuclei and is also involved in meiotic chromosomal remodeling in late pachytene nuclei. Required for the removal of the cohesin component scc-1 from mitotic chromosomes. This is Wings apart-like protein homolog 1 from Caenorhabditis elegans.